Here is a 101-residue protein sequence, read N- to C-terminus: NADH-quinone oxidoreductase subunit K (101 aa).

Helical transmembrane passes span 4–24 (LSDY…GIFV), 29–49 (IITL…NFVA), and 61–81 (IFVF…LAIL).

The protein belongs to the complex I subunit 4L family. As to quaternary structure, NDH-1 is composed of 14 different subunits. Subunits NuoA, H, J, K, L, M, N constitute the membrane sector of the complex.

Its subcellular location is the cell inner membrane. It catalyses the reaction a quinone + NADH + 5 H(+)(in) = a quinol + NAD(+) + 4 H(+)(out). Functionally, NDH-1 shuttles electrons from NADH, via FMN and iron-sulfur (Fe-S) centers, to quinones in the respiratory chain. The immediate electron acceptor for the enzyme in this species is believed to be ubiquinone. Couples the redox reaction to proton translocation (for every two electrons transferred, four hydrogen ions are translocated across the cytoplasmic membrane), and thus conserves the redox energy in a proton gradient. The sequence is that of NADH-quinone oxidoreductase subunit K from Ruthia magnifica subsp. Calyptogena magnifica.